A 209-amino-acid chain; its full sequence is Uracil phosphoribosyltransferase (209 aa).

5-phospho-alpha-D-ribose 1-diphosphate-binding positions include Arg-79, Arg-104, and 131–139 (DPMLATGGS). Uracil is bound by residues Ile-194 and 199 to 201 (GDA). Position 200 (Asp-200) interacts with 5-phospho-alpha-D-ribose 1-diphosphate.

Belongs to the UPRTase family. Requires Mg(2+) as cofactor.

It carries out the reaction UMP + diphosphate = 5-phospho-alpha-D-ribose 1-diphosphate + uracil. Its pathway is pyrimidine metabolism; UMP biosynthesis via salvage pathway; UMP from uracil: step 1/1. With respect to regulation, allosterically activated by GTP. Catalyzes the conversion of uracil and 5-phospho-alpha-D-ribose 1-diphosphate (PRPP) to UMP and diphosphate. This Streptococcus pneumoniae serotype 4 (strain ATCC BAA-334 / TIGR4) protein is Uracil phosphoribosyltransferase.